Consider the following 501-residue polypeptide: GDP-fucose protein O-fucosyltransferase 4 (501 aa).

Residues 1–10 are Cytoplasmic-facing; the sequence is MLLQMAGRGK. Residues 11-31 traverse the membrane as a helical; Signal-anchor for type II membrane protein segment; the sequence is MVPCVCLGLLGVLCWVWVSFA. Topologically, residues 32–501 are lumenal; the sequence is SFPDEQLSLG…MAVRRARGKN (470 aa). N-linked (GlcNAc...) asparagine glycosylation occurs at Asn-173. Residues Cys-396 and Cys-399 are joined by a disulfide bond. 2 N-linked (GlcNAc...) asparagine glycosylation sites follow: Asn-428 and Asn-478.

The protein belongs to the glycosyltransferase 10 family.

It is found in the endoplasmic reticulum membrane. The enzyme catalyses L-threonyl-[protein] + GDP-beta-L-fucose = 3-O-(alpha-L-fucosyl)-L-threonyl-[protein] + GDP + H(+). The catalysed reaction is L-seryl-[protein] + GDP-beta-L-fucose = 3-O-(alpha-L-fucosyl)-L-seryl-[protein] + GDP + H(+). It participates in protein modification; protein glycosylation. Functionally, protein O-fucosyltransferase that specifically catalyzes O-fucosylation of serine or threonine residues in EMI domains of target proteins. Attaches fucose through an O-glycosidic linkage. O-fucosylation of EMI domain-containing proteins may be required for facilitating protein folding and secretion. The chain is GDP-fucose protein O-fucosyltransferase 4 (fut11) from Takifugu rubripes (Japanese pufferfish).